The chain runs to 154 residues: Deoxyuridine 5'-triphosphate nucleotidohydrolase (154 aa).

Residues 64-66 (RSG), asparagine 77, 81-83 (TID), and lysine 91 each bind substrate.

Belongs to the dUTPase family. Homotrimer. Requires Mg(2+) as cofactor.

It carries out the reaction dUTP + H2O = dUMP + diphosphate + H(+). Its pathway is pyrimidine metabolism; dUMP biosynthesis; dUMP from dCTP (dUTP route): step 2/2. Its function is as follows. This enzyme is involved in nucleotide metabolism: it produces dUMP, the immediate precursor of thymidine nucleotides and it decreases the intracellular concentration of dUTP so that uracil cannot be incorporated into DNA. This chain is Deoxyuridine 5'-triphosphate nucleotidohydrolase, found in Mycobacterium marinum (strain ATCC BAA-535 / M).